We begin with the raw amino-acid sequence, 103 residues long: NADH-quinone oxidoreductase subunit K (103 aa).

Helical transmembrane passes span 1-21, 29-49, and 62-82; these read MIVPLSHVLAVAALLFAVGGV, ILLILIGVEFMLAAAGLAFAG, and AVIIIMGLASAEAGLGLALLV. The segment at 84-103 is disordered; sequence GRRGGGTDRADSYDRLGEES. A compositionally biased stretch (basic and acidic residues) spans 88 to 103; it reads GGTDRADSYDRLGEES.

This sequence belongs to the complex I subunit 4L family. NDH-1 is composed of 14 different subunits. Subunits NuoA, H, J, K, L, M, N constitute the membrane sector of the complex.

It is found in the cell inner membrane. It carries out the reaction a quinone + NADH + 5 H(+)(in) = a quinol + NAD(+) + 4 H(+)(out). Functionally, NDH-1 shuttles electrons from NADH, via FMN and iron-sulfur (Fe-S) centers, to quinones in the respiratory chain. The immediate electron acceptor for the enzyme in this species is believed to be ubiquinone. Couples the redox reaction to proton translocation (for every two electrons transferred, four hydrogen ions are translocated across the cytoplasmic membrane), and thus conserves the redox energy in a proton gradient. The sequence is that of NADH-quinone oxidoreductase subunit K from Solidesulfovibrio magneticus (strain ATCC 700980 / DSM 13731 / RS-1) (Desulfovibrio magneticus).